A 319-amino-acid polypeptide reads, in one-letter code: Ankyrin repeat domain-containing protein 1 (319 aa).

The stretch at 61-89 (KSEKQREAELKKKKLEQRSKLENLEDLEI) forms a coiled coil. ANK repeat units follow at residues 152 to 181 (YKRTALHRACLEGHLAIVEKLMEAGAQIEF), 185 to 214 (LESTAIHWASRGGNLDVLKLLLNKGAKISA), 218 to 247 (LLSTALHVAVRTGHYECAEHLIACEADLNA), 251 to 280 (EGDTPLHDAVRLNRYKMIRLLIMYGADLNI), and 284 to 315 (AGKTPMDLVLHWQNGTKAIFDSLRENSYKTSR).

Interacts with YBX1. Interacts with TTN/titin. Mainly expressed in activated vascular endothelial cells. To a lower extent, also expressed in hepatoma cells.

Its subcellular location is the nucleus. May play an important role in endothelial cell activation. May act as a nuclear transcription factor that negatively regulates the expression of cardiac genes. Induction seems to be correlated with apoptotic cell death in hepatoma cells. This chain is Ankyrin repeat domain-containing protein 1 (ANKRD1), found in Homo sapiens (Human).